A 97-amino-acid chain; its full sequence is Eclosion hormone (97 aa).

The signal sequence occupies residues 1-17 (MNCKPLILCTFVAVAMC). Disulfide bonds link Cys48–Cys72, Cys52–Cys68, and Cys55–Cys83.

It belongs to the insect eclosion hormone family. As to expression, expressed in a single pair of brain neurons which extend their processes the entire length of the central nervous system and also to the corpora cardiaca portion of the ring gland. These cells show massive depletion of immunoreactive Eh at ecdysis.

It is found in the secreted. Its function is as follows. Neuropeptide that triggers the performance of ecdysis behaviors at the end of a molt. It triggers adult behavior patterns: larval, pupal and adult ecdysis, and plasticization during the molt. The sequence is that of Eclosion hormone (Eh) from Drosophila melanogaster (Fruit fly).